We begin with the raw amino-acid sequence, 529 residues long: Ell-associated factor Eaf (529 aa).

Disordered regions lie at residues A155–T235 and A253–D529. Residues E167–N186 are compositionally biased toward polar residues. 4 stretches are compositionally biased toward low complexity: residues R194 to S215, S256 to G265, H306 to N315, and Q327 to Q346. S196 bears the Phosphoserine mark. Polar residues predominate over residues R347–M359. A compositionally biased stretch (acidic residues) spans D401–D416. 4 stretches are compositionally biased toward low complexity: residues H431 to Q451, Q469 to Q480, Q488 to S499, and N510 to S523.

The protein belongs to the EAF family.

The protein resides in the nucleus. Functionally, promotes transcriptional elongation by Su(Tpl)/ELL. Essential for development. This Drosophila grimshawi (Hawaiian fruit fly) protein is Ell-associated factor Eaf.